The primary structure comprises 229 residues: Potassium/proton antiporter CemA (229 aa).

The next 4 membrane-spanning stretches (helical) occupy residues 7–27 (FTPL…SLSF), 114–134 (IICF…LVIL), 154–174 (ILLV…ELMI), and 189–209 (IISG…KYWI).

The protein belongs to the CemA family.

The protein resides in the plastid. It is found in the chloroplast inner membrane. It carries out the reaction K(+)(in) + H(+)(out) = K(+)(out) + H(+)(in). In terms of biological role, contributes to K(+)/H(+) antiport activity by supporting proton efflux to control proton extrusion and homeostasis in chloroplasts in a light-dependent manner to modulate photosynthesis. Prevents excessive induction of non-photochemical quenching (NPQ) under continuous-light conditions. Indirectly promotes efficient inorganic carbon uptake into chloroplasts. The protein is Potassium/proton antiporter CemA of Acorus calamus var. americanus (American sweet flag).